Consider the following 259-residue polypeptide: Gasdermin bGSDM (259 aa).

Residue C3 is the site of S-palmitoyl cysteine attachment. The next 4 beta stranded transmembrane spans lie at 70 to 86, 98 to 116, 162 to 179, and 187 to 203; these read FQFR…AASV, SGSF…IQLS, GIRI…DLSA, and AKAK…SYAF. Positions 244–259 are C-terminal region; it reads PFAFIGDDAFVDLPES.

Belongs to the bacterial gasdermin family. As to quaternary structure, monomer in solution. Forms large, homooligomeric ring-shaped pores when inserted in membranes. Post-translationally, palmitoylation helps stabilize the inactive state; may self palmitoylate. Palmitoylation plays a significant role in pore formation.

It is found in the cytoplasm. It localises to the cell inner membrane. The full-length protein before cleavage is inactive: intramolecular interactions between the N-terminal domain and the C-terminal region as well as the lipid modification, mediate autoinhibition. The pyroptosis-like-inducing activity is carried by the released N-terminal domain (Gasdermin bGSDM, N-terminus). Its function is as follows. Precursor of a pore-forming protein involved in defense against bacteriophages. Expression of bGSDM and the neighboring protease gene (Ga0098714_109514) is toxic in E.coli on solid medium. Cleavage of this precursor by its dedicated protease releases the active moiety (gasdermin bGSDM, N-terminus) which inserts into membranes, forming pores and triggering cell death. Functionally, pore-forming protein that causes membrane permeabilization via a pyroptosis-like activity. Makes ring-like pores when released. This Bradyrhizobium tropiciagri protein is Gasdermin bGSDM.